A 327-amino-acid polypeptide reads, in one-letter code: Putative HTH-type transcriptional regulatory protein Mevan_1514 (327 aa).

Positions 128–189 (LKETREKLNI…IKGINITDYF (62 aa)) constitute an HTH cro/C1-type domain. Residues 139–158 (VGELAEFSRVSRKTIYKYEQ) constitute a DNA-binding region (H-T-H motif).

The polypeptide is Putative HTH-type transcriptional regulatory protein Mevan_1514 (Methanococcus vannielii (strain ATCC 35089 / DSM 1224 / JCM 13029 / OCM 148 / SB)).